Here is a 264-residue protein sequence, read N- to C-terminus: Indole-3-glycerol phosphate synthase (264 aa).

The protein belongs to the TrpC family.

It carries out the reaction 1-(2-carboxyphenylamino)-1-deoxy-D-ribulose 5-phosphate + H(+) = (1S,2R)-1-C-(indol-3-yl)glycerol 3-phosphate + CO2 + H2O. It functions in the pathway amino-acid biosynthesis; L-tryptophan biosynthesis; L-tryptophan from chorismate: step 4/5. This Azoarcus sp. (strain BH72) protein is Indole-3-glycerol phosphate synthase.